Here is a 136-residue protein sequence, read N- to C-terminus: Selenoprotein M (136 aa).

The signal sequence occupies residues 1-19; it reads MWLPLPLLLGLLQLQPILS. Active-site nucleophile residues include Cys-38 and Sec-41. Residues 38-41 constitute a cross-link (cysteinyl-selenocysteine (Cys-Sec)); the sequence is CGGU. Position 41 (Sec-41) is a non-standard amino acid, selenocysteine. The tract at residues 111-136 is disordered; the sequence is SSPDAPVPAEFKMAPARASGDTKEDL. The short motif at 133–136 is the Prevents secretion from ER element; it reads KEDL.

Belongs to the selenoprotein M/F family.

The protein resides in the endoplasmic reticulum. Functionally, may function as a thiol-disulfide oxidoreductase that participates in disulfide bond formation. This chain is Selenoprotein M (selenom), found in Xenopus laevis (African clawed frog).